A 367-amino-acid polypeptide reads, in one-letter code: Phosphoribosylaminoimidazole-succinocarboxamide synthase (367 aa).

The protein belongs to the SAICAR synthetase family.

The catalysed reaction is 5-amino-1-(5-phospho-D-ribosyl)imidazole-4-carboxylate + L-aspartate + ATP = (2S)-2-[5-amino-1-(5-phospho-beta-D-ribosyl)imidazole-4-carboxamido]succinate + ADP + phosphate + 2 H(+). Its pathway is purine metabolism; IMP biosynthesis via de novo pathway; 5-amino-1-(5-phospho-D-ribosyl)imidazole-4-carboxamide from 5-amino-1-(5-phospho-D-ribosyl)imidazole-4-carboxylate: step 1/2. The sequence is that of Phosphoribosylaminoimidazole-succinocarboxamide synthase from Psychromonas ingrahamii (strain DSM 17664 / CCUG 51855 / 37).